The following is a 129-amino-acid chain: Small ribosomal subunit protein uS11 (129 aa).

The protein belongs to the universal ribosomal protein uS11 family. Part of the 30S ribosomal subunit. Interacts with proteins S7 and S18. Binds to IF-3.

In terms of biological role, located on the platform of the 30S subunit, it bridges several disparate RNA helices of the 16S rRNA. Forms part of the Shine-Dalgarno cleft in the 70S ribosome. This is Small ribosomal subunit protein uS11 from Azoarcus sp. (strain BH72).